Here is a 534-residue protein sequence, read N- to C-terminus: tRNA uridine(34) acetyltransferase (534 aa).

The radical S-adenosyl-L-methionine (rSAM) stretch occupies residues 70 to 330; that stretch reads KPVRTISGVA…GEFKPYREEE (261 aa). Residues 73–344 enclose the Radical SAM core domain; sequence RTISGVAVVA…ISYAKSIMPK (272 aa). Cys-90, Cys-95, and Cys-98 together coordinate [4Fe-4S] cluster. Lys-150 is an acetyl-CoA binding site. Cysteines 384 and 389 form a disulfide. The N-acetyltransferase domain maps to 387–534; it reads IRCREVGHVY…RVGAYMGKEL (148 aa). Acetyl-CoA contacts are provided by residues 461–464, 485–487, and Tyr-518; these read QLHV and YGR.

This sequence belongs to the ELP3 family. [4Fe-4S] cluster serves as cofactor.

It carries out the reaction uridine(34) in tRNA + acetyl-CoA + S-adenosyl-L-methionine + H2O = 5-(carboxymethyl)uridine(34) in tRNA + 5'-deoxyadenosine + L-methionine + CoA + 2 H(+). Its pathway is tRNA modification. In terms of biological role, tRNA uridine(34) acetyltransferase, which mediates formation of carboxymethyluridine in the wobble base at position 34 in tRNAs. The proposed mechanism is the following: (i) recruits S-adenosyl-L-methionine and cleaves it to generate a 5'-deoxyadenosine radical (5'-dA) in the radical S-adenosyl-L-methionine (rSAM) region, (ii) hydrolyzes acetyl-CoA in the N-acetyltransferase domain and (iii) an acetyl radical is formed by the products of the two domains and (iv) is transferred onto the C5 position of uridine(34) in the bound tRNA molecule. Does not show protein lysine acetyltransferase activity. The sequence is that of tRNA uridine(34) acetyltransferase from Methanocaldococcus infernus (strain DSM 11812 / JCM 15783 / ME).